Here is a 389-residue protein sequence, read N- to C-terminus: Tyrosine aminotransferase (389 aa).

Residue Lys-242 is modified to N6-(pyridoxal phosphate)lysine.

It belongs to the class-I pyridoxal-phosphate-dependent aminotransferase family. Homodimer. Pyridoxal 5'-phosphate is required as a cofactor.

It catalyses the reaction L-tyrosine + 2-oxoglutarate = 3-(4-hydroxyphenyl)pyruvate + L-glutamate. It participates in amino-acid degradation; L-phenylalanine degradation; acetoacetate and fumarate from L-phenylalanine: step 2/6. Transaminase involved in tyrosine breakdown. Converts tyrosine to p-hydroxyphenylpyruvate. The protein is Tyrosine aminotransferase (tatA) of Rhizobium meliloti (strain 1021) (Ensifer meliloti).